The primary structure comprises 318 residues: Type II restriction enzyme HaeIII (318 aa).

It carries out the reaction Endonucleolytic cleavage of DNA to give specific double-stranded fragments with terminal 5'-phosphates.. Functionally, a P subtype restriction enzyme that recognizes the double-stranded sequence 5'-GGCC-3' and cleaves after G-2. In Haemophilus aegyptius, this protein is Type II restriction enzyme HaeIII (haeIIIR).